A 202-amino-acid polypeptide reads, in one-letter code: Alpha-latrotoxin-Lm1a (202 aa).

ANK repeat units lie at residues 95 to 109 (LYNA…VGFK), 110 to 120 (LMESPEININE), 122 to 132 (NDWPVASTLLR), 133 to 138 (SSNVNV), 142 to 161 (NSDT…DINT), 163 to 170 (NGHLNIVK), 171 to 182 (YLVEEEDLSVDG), Lys184, 185 to 191 (YGIDMTI), and 193 to 202 (TALDIATDLK). The segment at 175 to 181 (EEDLSVD) is 4C4.1 epitope.

Belongs to the cationic peptide 01 (latrotoxin) family. 03 (alpha-latrotoxin) subfamily. Homotetramer in membranes. Processed by furin-like proteases at both the N- and C-termini. Post-translationally, contains 1 disulfide bond. Expressed in venom gland, cephalothorax, and abdomen tissues from both males and females.

The protein resides in the secreted. It is found in the target cell membrane. In terms of biological role, presynaptic neurotoxin that causes massive release of neurotransmitters from vertebrate (but not invertebrate) nerve terminals and endocrine cells via a complex mechanism involving activation of receptor(s) and toxin insertion into the plasma membrane with subsequent pore formation. Binds to neurexin-1-alpha (NRXN1) in a calcium dependent manner, adhesion G protein-coupled receptor L1 (ADGRL1, also termed latrophilin-1 and calcium-independent receptor of latrotoxin (CIRL)), and receptor-type tyrosine-protein phosphatase S (PTPRS), also termed PTP sigma. NRXN1 and PTPRS are suggested to provide a platform for binding and subsequent pore formation events. In contrast, binding to ADGRL1 does not involve oligomerization and channel formation, but direct downstream stimulation of the synaptic fusion machinery. This Latrodectus mactans (Black widow spider) protein is Alpha-latrotoxin-Lm1a.